The sequence spans 348 residues: tRNA N6-adenosine threonylcarbamoyltransferase (348 aa).

Fe cation is bound by residues H115 and H119. Substrate is bound by residues 138-142 (LVSGG), D171, G184, and N278. Position 306 (D306) interacts with Fe cation.

The protein belongs to the KAE1 / TsaD family. Fe(2+) serves as cofactor.

The protein localises to the cytoplasm. It catalyses the reaction L-threonylcarbamoyladenylate + adenosine(37) in tRNA = N(6)-L-threonylcarbamoyladenosine(37) in tRNA + AMP + H(+). Required for the formation of a threonylcarbamoyl group on adenosine at position 37 (t(6)A37) in tRNAs that read codons beginning with adenine. Is involved in the transfer of the threonylcarbamoyl moiety of threonylcarbamoyl-AMP (TC-AMP) to the N6 group of A37, together with TsaE and TsaB. TsaD likely plays a direct catalytic role in this reaction. This is tRNA N6-adenosine threonylcarbamoyltransferase from Methylibium petroleiphilum (strain ATCC BAA-1232 / LMG 22953 / PM1).